The chain runs to 299 residues: ATP phosphoribosyltransferase (299 aa).

The protein belongs to the ATP phosphoribosyltransferase family. Long subfamily. As to quaternary structure, equilibrium between an active dimeric form, an inactive hexameric form and higher aggregates. Interconversion between the various forms is largely reversible and is influenced by the natural substrates and inhibitors of the enzyme. It depends on Mg(2+) as a cofactor.

The protein resides in the cytoplasm. The enzyme catalyses 1-(5-phospho-beta-D-ribosyl)-ATP + diphosphate = 5-phospho-alpha-D-ribose 1-diphosphate + ATP. It participates in amino-acid biosynthesis; L-histidine biosynthesis; L-histidine from 5-phospho-alpha-D-ribose 1-diphosphate: step 1/9. Feedback inhibited by histidine. In terms of biological role, catalyzes the condensation of ATP and 5-phosphoribose 1-diphosphate to form N'-(5'-phosphoribosyl)-ATP (PR-ATP). Has a crucial role in the pathway because the rate of histidine biosynthesis seems to be controlled primarily by regulation of HisG enzymatic activity. In Pectobacterium atrosepticum (strain SCRI 1043 / ATCC BAA-672) (Erwinia carotovora subsp. atroseptica), this protein is ATP phosphoribosyltransferase.